Here is a 338-residue protein sequence, read N- to C-terminus: Formamidase (338 aa).

The 243-residue stretch at 15 to 257 (VVIGLAQLAL…DEIVCCELRP (243 aa)) folds into the CN hydrolase domain. Glu61 acts as the Proton acceptor in catalysis. Residue Lys130 is the Proton donor of the active site. The Nucleophile role is filled by Cys163.

This sequence belongs to the carbon-nitrogen hydrolase superfamily. Aliphatic amidase family.

The catalysed reaction is formamide + H2O = formate + NH4(+). Its function is as follows. Is an aliphatic amidase with a restricted substrate specificity, as it only hydrolyzes formamide. The protein is Formamidase of Pseudomonas syringae pv. tomato (strain ATCC BAA-871 / DC3000).